The following is a 275-amino-acid chain: Trans-aconitate 2-methyltransferase (275 aa).

Belongs to the methyltransferase superfamily. Tam family.

The protein localises to the cytoplasm. It catalyses the reaction trans-aconitate + S-adenosyl-L-methionine = (E)-3-(methoxycarbonyl)pent-2-enedioate + S-adenosyl-L-homocysteine. Its function is as follows. Catalyzes the S-adenosylmethionine monomethyl esterification of trans-aconitate. The protein is Trans-aconitate 2-methyltransferase of Pseudomonas aeruginosa (strain ATCC 15692 / DSM 22644 / CIP 104116 / JCM 14847 / LMG 12228 / 1C / PRS 101 / PAO1).